The sequence spans 619 residues: Chaperone protein HscA homolog (619 aa).

It belongs to the heat shock protein 70 family.

In terms of biological role, chaperone involved in the maturation of iron-sulfur cluster-containing proteins. Has a low intrinsic ATPase activity which is markedly stimulated by HscB. The sequence is that of Chaperone protein HscA homolog from Azotobacter vinelandii.